A 417-amino-acid polypeptide reads, in one-letter code: UPF0754 membrane protein PCC8801_0398 (417 aa).

2 helical membrane passes run 11–31 and 395–415; these read FSLLWTIALPPIAGTIIGYFT and IVNIGGVLGFLVGVFQSILLI.

This sequence belongs to the UPF0754 family.

The protein localises to the cell inner membrane. The polypeptide is UPF0754 membrane protein PCC8801_0398 (Rippkaea orientalis (strain PCC 8801 / RF-1) (Cyanothece sp. (strain PCC 8801))).